A 235-amino-acid chain; its full sequence is MEKERINENTIRVMIDNSDLKDRGITVMELLGNHEKIESFFYNILSEVDTEHDFEDDDQVSFQILPNRNGLELFISRLDEENKISDILDNITNFSSKQPANIDNISDKRRQELRQSDKGDIVKSKVSSSDHKDGSQENFENTQVILALSDFENAIAIANSLKIENLVSDLYLYEGAYYLNLLVPDHSVSQEQLKNELAIALEFSRISHVTHEVLHEHGQLILKHEALEKIKSLFS.

A compositionally biased stretch (basic and acidic residues) spans 113–135 (LRQSDKGDIVKSKVSSSDHKDGS). Residues 113 to 136 (LRQSDKGDIVKSKVSSSDHKDGSQ) form a disordered region.

This sequence belongs to the MecA family. As to quaternary structure, homodimer.

Enables the recognition and targeting of unfolded and aggregated proteins to the ClpC protease or to other proteins involved in proteolysis. In Leuconostoc mesenteroides subsp. mesenteroides (strain ATCC 8293 / DSM 20343 / BCRC 11652 / CCM 1803 / JCM 6124 / NCDO 523 / NBRC 100496 / NCIMB 8023 / NCTC 12954 / NRRL B-1118 / 37Y), this protein is Adapter protein MecA.